Here is a 111-residue protein sequence, read N- to C-terminus: MIQVLLVTICLAVFPYQGSSIILESGNVNDYEIVYPKKVTVLPTGAMNSGNPCCDPVTCKPRRGEHCVSGPCCRNCKFLNAGTICNRARGDDMNDYCTGISSDCPRNPYKD.

The N-terminal stretch at 1–20 (MIQVLLVTICLAVFPYQGSS) is a signal peptide. Residues 21-47 (IILESGNVNDYEIVYPKKVTVLPTGAM) constitute a propeptide that is removed on maturation. The region spanning 47-111 (MNSGNPCCDP…SDCPRNPYKD (65 aa)) is the Disintegrin domain. Disulfide bonds link Cys-53–Cys-76, Cys-67–Cys-73, Cys-72–Cys-97, and Cys-85–Cys-104. Residues 89–91 (RGD) carry the Cell attachment site motif.

It belongs to the disintegrin family. Dimeric disintegrin subfamily. As to quaternary structure, heterodimer with subunit beta; disulfide-linked. Expressed by the venom gland.

The protein localises to the secreted. Strongly inhibits ADP-induced platelet aggregation on human platelet-rich plasma. Also avidly binds to the laminin-binding beta-1 integrins (alpha-3/beta-1, alpha-6/beta-1, and alpha-7/beta-1) in an RGD-independent manner. This is Disintegrin lebein-1-alpha from Macrovipera lebetinus (Levantine viper).